A 646-amino-acid polypeptide reads, in one-letter code: Beta-mannosyltransferase 6 (646 aa).

Residues 1-25 (MGNYKPSIKQYVVTVKAIKSSQFGR) lie on the Cytoplasmic side of the membrane. Residues 26–46 (LGICAVVLLFVLGYPFYFISN) traverse the membrane as a helical segment. The Extracellular portion of the chain corresponds to 47–646 (NPFDTSIRYQ…LTGGWLPSHN (600 aa)). 9 N-linked (GlcNAc...) asparagine glycosylation sites follow: asparagine 62, asparagine 81, asparagine 103, asparagine 117, asparagine 127, asparagine 132, asparagine 146, asparagine 334, and asparagine 393.

The protein belongs to the BMT family.

The protein resides in the membrane. Beta-mannosyltransferase involved in cell wall biosynthesis. Required for beta-1,2-mannose transfer on phospholipomannan. Required for pro-inflammatory response in macrophages through phospholipomannan-induced TNF-alpha production. The chain is Beta-mannosyltransferase 6 (BMT6) from Candida albicans (strain SC5314 / ATCC MYA-2876) (Yeast).